A 482-amino-acid polypeptide reads, in one-letter code: Histone deacetylase 1 (482 aa).

A histone deacetylase region spans residues 9-321; the sequence is RKVCYYYDGD…WTYETAVALD (313 aa). Gly27 and Lys31 together coordinate 1D-myo-inositol 1,4,5,6-tetrakisphosphate. At Lys74 the chain carries N6-acetyllysine; alternate. Lys74 participates in a covalent cross-link: Glycyl lysine isopeptide (Lys-Gly) (interchain with G-Cter in SUMO2); alternate. His141 is an active-site residue. Zn(2+)-binding residues include Asp176 and His178. Residue Lys220 is modified to N6-acetyllysine. The residue at position 261 (Cys261) is an S-nitrosocysteine. Asp264 is a Zn(2+) binding site. Arg270 contacts 1D-myo-inositol 1,4,5,6-tetrakisphosphate. At Cys273 the chain carries S-nitrosocysteine. A compositionally biased stretch (acidic residues) spans 390–400; sequence PEESGDEDEDD. The tract at residues 390-482 is disordered; sequence PEESGDEDED…KGVKEEVKLA (93 aa). Phosphoserine occurs at positions 393, 406, and 409. Basic and acidic residues predominate over residues 401–416; it reads PDKRISICSSDKRIAC. Over residues 417–427 the composition is skewed to acidic residues; that stretch reads EEEFSDSEEEG. Residues Ser421 and Ser423 each carry the phosphoserine; by CK2 modification. N6-methylated lysine; by EHMT2 is present on Lys432. Lys438 participates in a covalent cross-link: Glycyl lysine isopeptide (Lys-Gly) (interchain with G-Cter in SUMO2). The span at 443 to 482 shows a compositional bias: basic and acidic residues; that stretch reads VKTEDEKEKDPEEKKEVTEEEKTKEEKPEAKGVKEEVKLA. Lys444 is covalently cross-linked (Glycyl lysine isopeptide (Lys-Gly) (interchain with G-Cter in SUMO2); alternate). Residue Lys444 forms a Glycyl lysine isopeptide (Lys-Gly) (interchain with G-Cter in SUMO); alternate linkage. Glycyl lysine isopeptide (Lys-Gly) (interchain with G-Cter in SUMO2) cross-links involve residues Lys456, Lys457, and Lys473. Residue Lys476 forms a Glycyl lysine isopeptide (Lys-Gly) (interchain with G-Cter in SUMO2); alternate linkage. Lys476 is covalently cross-linked (Glycyl lysine isopeptide (Lys-Gly) (interchain with G-Cter in SUMO); alternate). Lys480 is covalently cross-linked (Glycyl lysine isopeptide (Lys-Gly) (interchain with G-Cter in SUMO2)).

This sequence belongs to the histone deacetylase family. HD type 1 subfamily. In terms of assembly, part of the core histone deacetylase (HDAC) complex composed of HDAC1, HDAC2, RBBP4 and RBBP7, the core complex associates with SIN3, SAP18 and SAP30 to form the SIN3 HDAC complex. Component of the nucleosome remodeling and deacetylase (NuRD) repressor complex, composed of core proteins MTA1, MTA2, MTA3, RBBP4, RBBP7, HDAC1, HDAC2, MBD2, MBD3, and peripherally associated proteins CDK2AP1, CDK2AP2, GATAD2A, GATAD2B, CHD3, CHD4 and CHD5. The exact stoichiometry of the NuRD complex is unknown, and some subunits such as MBD2 and MBD3, GATAD2A and GATAD2B, and CHD3, CHD4 and CHD5 define mutually exclusive NuRD complexes. Component of a BHC histone deacetylase complex that contains HDAC1, HDAC2, HMG20B/BRAF35, KDM1A, RCOR1/CoREST and PHF21A/BHC80. The BHC complex may also contain ZMYM2, ZNF217, ZMYM3, GSE1 and GTF2I. Component of a mSin3A corepressor complex that contains SIN3A, SAP130, SUDS3/SAP45, ARID4B/SAP180, HDAC1 and HDAC2. Component of the SIN3B complex, which includes SIN3B, HDAC1, PHF12 and MORF4L1. Found in a trimeric complex with APBB1 and TSHZ3; the interaction between HDAC1 and APBB1 is mediated by TSHZ3. Forms a complex comprising APPL1, RUVBL2, APPL2, CTNNB1 and HDAC2. Component of a RCOR/GFI/KDM1A/HDAC complex. Part of a complex composed of TRIM28, HDAC1, HDAC2 and EHMT2. Part of a complex containing at least CDYL, MIER1, MIER2, HDAC1 and HDAC2. The large PER complex involved in the histone deacetylation is composed of at least HDAC1, PER2, SFPQ and SIN3A. Associates with the 9-1-1 complex; interacts with HUS1. Found in a complex with DNMT3A and HDAC7. Found in a complex with YY1, SIN3A and GON4L. Identified in a histone deacetylase complex that contains DNTTIP1, HDAC1 and MIDEAS; this complex assembles into a tetramer that contains four copies of each protein chain. Found in a complex composed of at least SINHCAF, SIN3A, HDAC1, SAP30, RBBP4, OGT and TET1. Interacts with GFI1; the interaction is direct. Interacts directly with GFI1B. Interacts with TSHZ3 (via N-terminus); the interaction is direct. Interacts with APEX1; the interaction is not dependent on the acetylated status of APEX1. Interacts with BANP. Interacts with BAZ2A/TIP5. Interacts with BCL6. Interacts with BCOR. Interacts with BHLHE40/DEC1. Interacts with BRCC3; this interaction is enhanced in the presence of PWWP2B. Interacts with BRMS1. Interacts with BRMS1L. Interacts with C10orf90/FATS (via its N-terminal); the interaction prevents binding of HDAC1 to CDKN1A/p21 and facilitates the acetylation and stabilization of CDKN1A/p21. Interacts with CBFA2T3. Interacts with CCAR2. Interacts with CDK2AP1. Interacts with CHD3. Interacts with CHD4. Interacts with CHFR. Interacts with CIART. Interacts with CDKN1A/p21. Interacts with CDK5 complexed to CDK5R1 (p25). Interacts with CRY1. Interacts with DAXX. Interacts with DDIT3/CHOP. Interacts with DDX5. Interacts with DHX36; this interaction occurs in a RNA-dependent manner. Interacts with DNMT1. Interacts with DNTTIP1. Interacts with E4F1. Interacts with EP300. Interacts with ERCC6. Interacts with GATAD2A. Interacts with HCFC1. Interacts with HDAC9. Interacts with HUS1. Interacts with INSM1. Interacts with KDM4A. Interacts with KDM5A; this interaction impairs histone deacetylation. Interacts with KDM5B. Interacts with KLF1. Interacts with MBD3L2. Interacts with MIER1. Interacts with NFE4. Interacts with NR4A2/NURR1. Interacts with NR1D2 (via C-terminus). Interacts with NRIP1. Interacts with NSD2. Interacts with PACS2. Interacts with PHB2. Interacts with PPHLN1. Interacts with PRDM6. Interacts with PRDM16. Interacts with PWWP2A in a MTA1-dependent manner. Interacts with PWWP2B. Interacts with RB1. Interacts with RERE. Interacts with SANBR (via the BTB domain). Interacts with SAMSN1. Interacts with SAP30L. Interacts with SETDB1. Interacts with SIN3A. Interacts with SMAD3. Interacts with SMAD4; positively regulated by ZBTB7A. Interacts with SMARCAD1. Interacts with SMARCA4/BRG1. Interacts with SMYD2. Interacts with SMYD4 (via MYND-type zinc finger). Interacts with SP1; the interaction deacetylates SP1 and regulates its transcriptional activity. Interacts with SP3; the interaction deacetylates SP3 and regulates its transcriptional activity. In vitro, C(18) ceramides increase this interaction and the subsequent SP3 deacetylation and SP3-mediated repression of the TERT promoter. Interacts with SPEN/MINT. Interacts with SPHK2. Interacts with SUV39H1. Interacts with TGIF. Interacts with TGIF2. Interacts with TRAF6. Interacts with TRIM28; the interaction recruits HDAC1 to E2F1 and inhibits its acetylation. Interacts with TSC22D3 isoform 1; this interaction affects HDAC1 activity on MYOG promoter and thus inhibits MYOD1 transcriptional activity. Interacts with UHRF1. Interacts with UHRF2. Interacts with ZBTB7A. Interacts with ZMYND8. Interacts with ZMYND15. Interacts with ZNF431. Interacts with ZNF516; this interaction is enhanced in the presence of PWWP2B. Interacts with ZNF541. Interacts with ZNF638. Interacts with ZNHIT1. Interacts with the non-histone region of MACROH2A1. Identified in a complex with HDAC2, KCTD19, DNTTIP1 and ZNF541. Interacts with VRK1. (Microbial infection) Interacts with SV40 large T antigen. It depends on Zn(2+) as a cofactor. Sumoylated on Lys-444 and Lys-476; which promotes enzymatic activity. Desumoylated by SENP1. Post-translationally, phosphorylation on Ser-421 and Ser-423 promotes enzymatic activity and interactions with NuRD and SIN3 complexes. Phosphorylated by CDK5. In terms of processing, ubiquitinated by CHFR, leading to its degradation by the proteasome. Ubiquitinated by KCTD11, leading to proteasomal degradation. In terms of tissue distribution, ubiquitous, with higher levels in heart, pancreas and testis, and lower levels in kidney and brain.

It localises to the nucleus. It carries out the reaction N(6)-acetyl-L-lysyl-[histone] + H2O = L-lysyl-[histone] + acetate. The enzyme catalyses N(6)-acetyl-L-lysyl-[protein] + H2O = L-lysyl-[protein] + acetate. The catalysed reaction is N(6)-(2E)-butenoyl-L-lysyl-[protein] + H2O = (2E)-2-butenoate + L-lysyl-[protein]. It catalyses the reaction N(6)-[(S)-lactoyl]-L-lysyl-[protein] + H2O = (S)-lactate + L-lysyl-[protein]. With respect to regulation, inositol tetraphosphate (1D-myo-inositol 1,4,5,6-tetrakisphosphate) may act as an intermolecular glue between HDAC1 and N-Cor repressor complex components. Histone deacetylase that catalyzes the deacetylation of lysine residues on the N-terminal part of the core histones (H2A, H2B, H3 and H4). Histone deacetylation gives a tag for epigenetic repression and plays an important role in transcriptional regulation, cell cycle progression and developmental events. Histone deacetylases act via the formation of large multiprotein complexes. Acts as a component of the histone deacetylase NuRD complex which participates in the remodeling of chromatin. As part of the SIN3B complex is recruited downstream of the constitutively active genes transcriptional start sites through interaction with histones and mitigates histone acetylation and RNA polymerase II progression within transcribed regions contributing to the regulation of transcription. Also functions as a deacetylase for non-histone targets, such as NR1D2, RELA, SP1, SP3, STAT3 and TSHZ3. Deacetylates SP proteins, SP1 and SP3, and regulates their function. Component of the BRG1-RB1-HDAC1 complex, which negatively regulates the CREST-mediated transcription in resting neurons. Upon calcium stimulation, HDAC1 is released from the complex and CREBBP is recruited, which facilitates transcriptional activation. Deacetylates TSHZ3 and regulates its transcriptional repressor activity. Deacetylates 'Lys-310' in RELA and thereby inhibits the transcriptional activity of NF-kappa-B. Deacetylates NR1D2 and abrogates the effect of KAT5-mediated relieving of NR1D2 transcription repression activity. Component of a RCOR/GFI/KDM1A/HDAC complex that suppresses, via histone deacetylase (HDAC) recruitment, a number of genes implicated in multilineage blood cell development. Involved in CIART-mediated transcriptional repression of the circadian transcriptional activator: CLOCK-BMAL1 heterodimer. Required for the transcriptional repression of circadian target genes, such as PER1, mediated by the large PER complex or CRY1 through histone deacetylation. In addition to protein deacetylase activity, also has protein-lysine deacylase activity: acts as a protein decrotonylase and delactylase by mediating decrotonylation ((2E)-butenoyl) and delactylation (lactoyl) of histones, respectively. The chain is Histone deacetylase 1 from Homo sapiens (Human).